Consider the following 242-residue polypeptide: 7-cyano-7-deazaguanine synthase (242 aa).

13–23 contacts ATP; the sequence is FSGGQDSSVCL. Zn(2+)-binding residues include C201, C216, C219, and C222.

It belongs to the QueC family. Requires Zn(2+) as cofactor.

It catalyses the reaction 7-carboxy-7-deazaguanine + NH4(+) + ATP = 7-cyano-7-deazaguanine + ADP + phosphate + H2O + H(+). Its pathway is purine metabolism; 7-cyano-7-deazaguanine biosynthesis. Its function is as follows. Catalyzes the ATP-dependent conversion of 7-carboxy-7-deazaguanine (CDG) to 7-cyano-7-deazaguanine (preQ(0)). The chain is 7-cyano-7-deazaguanine synthase from Caulobacter vibrioides (strain ATCC 19089 / CIP 103742 / CB 15) (Caulobacter crescentus).